We begin with the raw amino-acid sequence, 64 residues long: Large ribosomal subunit protein bL35 (64 aa).

The protein belongs to the bacterial ribosomal protein bL35 family.

In Alcanivorax borkumensis (strain ATCC 700651 / DSM 11573 / NCIMB 13689 / SK2), this protein is Large ribosomal subunit protein bL35.